Reading from the N-terminus, the 318-residue chain is Sol locus transcriptional repressor (318 aa).

4 TPR repeats span residues 65 to 98 (ANAY…RPKT), 99 to 132 (INDV…QPNV), 133 to 166 (GISY…GSTN), and 167 to 199 (SVYR…EPEK).

Transcriptional repressor of the sol locus (adhE/aad, ctfA, ctfB and adc) genes for butanol and acetone formation. The protein is Sol locus transcriptional repressor (solR) of Clostridium acetobutylicum (strain ATCC 824 / DSM 792 / JCM 1419 / IAM 19013 / LMG 5710 / NBRC 13948 / NRRL B-527 / VKM B-1787 / 2291 / W).